A 62-amino-acid chain; its full sequence is DNA-directed RNA polymerase subunit Rpo10 (62 aa).

Positions 6, 9, 43, and 44 each coordinate Zn(2+).

This sequence belongs to the archaeal Rpo10/eukaryotic RPB10 RNA polymerase subunit family. As to quaternary structure, part of the RNA polymerase complex. Zn(2+) is required as a cofactor.

It is found in the cytoplasm. It carries out the reaction RNA(n) + a ribonucleoside 5'-triphosphate = RNA(n+1) + diphosphate. In terms of biological role, DNA-dependent RNA polymerase (RNAP) catalyzes the transcription of DNA into RNA using the four ribonucleoside triphosphates as substrates. The protein is DNA-directed RNA polymerase subunit Rpo10 of Methanosarcina barkeri (strain Fusaro / DSM 804).